Reading from the N-terminus, the 320-residue chain is MEASVGQAGKTKFQIDLRRYLREDGEDEGLIHLICEIAEASKYIVNSIRTGDLGVAGTSNLYGEEQLALDVLSDRILRKRLAKSGVVSNIVSEETNDIVFVAPHRTGNYSVSYDPLDGSSLVDVNLAVGTIVSIYKGSDLMQPGNKQAAALYILYGPRTTLVYTTGNGVHEFGMNQLMEYTLLRRNIRMESKASIYAPGGLRSLYTDGTDKFVRQLETNGVKLRYSGGLVPDINQMLMKGKGIFFYPHLQNAPQGKLRLLFELNPMAFLMEQAGGAASNGHQRILDLVPQQFDERSPFFCGCREDVELAETLIREEKQIR.

Mg(2+) contacts are provided by E93, D114, L116, and D117. Residues 117–120 (DGSS), Y225, and K256 each bind substrate. E262 serves as a coordination point for Mg(2+).

Belongs to the FBPase class 1 family. As to quaternary structure, homotetramer. Requires Mg(2+) as cofactor.

Its subcellular location is the cytoplasm. The catalysed reaction is beta-D-fructose 1,6-bisphosphate + H2O = beta-D-fructose 6-phosphate + phosphate. Its pathway is carbohydrate biosynthesis; gluconeogenesis. This is Fructose-1,6-bisphosphatase class 1 from Syntrophotalea carbinolica (strain DSM 2380 / NBRC 103641 / GraBd1) (Pelobacter carbinolicus).